The following is a 165-amino-acid chain: Lymphocyte antigen 6K (165 aa).

Residues 1-17 form the signal peptide; the sequence is MALLALLLVVALPRVWT. Asparagine 20 carries an N-linked (GlcNAc...) asparagine glycan. The region spanning 47-141 is the UPAR/Ly6 domain; sequence ERENTFECQN…VFKEYAGSMG (95 aa). Glycine 138 is lipidated: GPI-anchor amidated glycine. Residues 139-165 constitute a propeptide, removed in mature form; it reads SMGESCGGLWLAILLLLASIAAGLSLS.

In terms of assembly, interacts with TEX101. Specifically expressed in testis (at protein level).

It localises to the secreted. The protein resides in the cytoplasm. It is found in the cell membrane. Its subcellular location is the cytoplasmic vesicle. The protein localises to the secretory vesicle. It localises to the acrosome. The protein resides in the membrane raft. Functionally, required for sperm migration into the oviduct and male fertility by controlling binding of sperm to zona pellucida. May play a role in cell growth. This Homo sapiens (Human) protein is Lymphocyte antigen 6K.